Here is an 888-residue protein sequence, read N- to C-terminus: Extra-large guanine nucleotide-binding protein 1 (888 aa).

The tract at residues 98–119 (SVIEHTEEEEEEEGGDGEDCEL) is disordered. Acidic residues predominate over residues 103–118 (TEEEEEEEGGDGEDCE). Positions 205 to 222 (RRVRVVPVKKQPQTKGKK) match the Nuclear localization signal motif. The RING-type; degenerate zinc finger occupies 225–268 (CYRCFKGSRFTEKEVCLVCDAKYCNSCVLRAMGSMPEGRKCVTC). A G-alpha domain is found at 482 to 879 (TLQKILLVGN…NICMSEYSMY (398 aa)). The tract at residues 485–498 (KILLVGNSGSGTST) is G1 motif. Residues 490–498 (GNSGSGTST) and 661–669 (DILYAEGVT) contribute to the GTP site. The Ca(2+) site is built by serine 497 and threonine 669. The segment at 661-669 (DILYAEGVT) is G2 motif. The tract at residues 702–711 (YQLIRVPSRG) is G3 motif. The segment at 770 to 777 (LLILNKYD) is G4 motif. Residue 774–777 (NKYD) participates in GTP binding. Residues 843–848 (SKSLDP) are G5 motif.

Belongs to the G-alpha family. XLG subfamily. Requires Ca(2+) as cofactor. Ubiquitous. Strongly expressed in vascular tissues, root and shoot meristems and lateral root primordia.

Its subcellular location is the nucleus. Functionally, guanine nucleotide-binding proteins (G proteins) are involved as modulators or transducers in various transmembrane signaling systems. Binds GTP with specificity. Plays a role in the root morphogenesis by regulation of the cell proliferation. The sequence is that of Extra-large guanine nucleotide-binding protein 1 (XLG1) from Arabidopsis thaliana (Mouse-ear cress).